The primary structure comprises 254 residues: Persulfide dioxygenase ETHE1, mitochondrial (254 aa).

The transit peptide at 1–7 (MAGSVLK) directs the protein to the mitochondrion. A phosphoserine mark is found at serine 14 and serine 19. The residue at position 32 (lysine 32) is an N6-acetyllysine; alternate. At lysine 32 the chain carries N6-succinyllysine; alternate. At lysine 66 the chain carries N6-acetyllysine. 3 residues coordinate Fe cation: histidine 79, histidine 135, and aspartate 154.

Belongs to the metallo-beta-lactamase superfamily. Glyoxalase II family. In terms of assembly, homodimer. Monomer. Interacts with TST. May interact with RELA. Fe(2+) is required as a cofactor.

The protein localises to the cytoplasm. It localises to the nucleus. Its subcellular location is the mitochondrion matrix. The catalysed reaction is S-sulfanylglutathione + O2 + H2O = sulfite + glutathione + 2 H(+). Glutathione increases enzyme activity. Functionally, sulfur dioxygenase that plays an essential role in hydrogen sulfide catabolism in the mitochondrial matrix. Hydrogen sulfide (H(2)S) is first oxidized by SQRDL, giving rise to cysteine persulfide residues. ETHE1 consumes molecular oxygen to catalyze the oxidation of the persulfide, once it has been transferred to a thiophilic acceptor, such as glutathione (R-SSH). Plays an important role in metabolic homeostasis in mitochondria by metabolizing hydrogen sulfide and preventing the accumulation of supraphysiological H(2)S levels that have toxic effects, due to the inhibition of cytochrome c oxidase. First described as a protein that can shuttle between the nucleus and the cytoplasm and suppress p53-induced apoptosis by sequestering the transcription factor RELA/NFKB3 in the cytoplasm and preventing its accumulation in the nucleus. The sequence is that of Persulfide dioxygenase ETHE1, mitochondrial (ETHE1) from Bos taurus (Bovine).